Reading from the N-terminus, the 623-residue chain is NAD-dependent malic enzyme 1, mitochondrial (623 aa).

Residues 1–38 (MGIANKLRLSSSSLSRILHRRILYSSAVRSFTTSEGHR) constitute a mitochondrion transit peptide. The active-site Proton donor is the Y143. R196 contacts NAD(+). K214 functions as the Proton acceptor in the catalytic mechanism. Residues E285, D286, and D309 each coordinate a divalent metal cation. The NAD(+) site is built by D309 and N464.

The protein belongs to the malic enzymes family. Homodimer. Heterodimer of two related subunits in NAD-MEH complex. Interacts with NAD-ME2. Mg(2+) is required as a cofactor. It depends on Mn(2+) as a cofactor. As to expression, expressed in leaves, stems, flowers, and roots (at protein level).

Its subcellular location is the mitochondrion. It catalyses the reaction (S)-malate + NAD(+) = pyruvate + CO2 + NADH. Activated by oxaloacetate (OAA), 2-ketoglutarate, succinate and fumarate as homodimer and by OAA, 2-ketoglutarate, succinate, fumarate and coenzyme A (acetyl-CoA and CoA) as heterodimer NAD-MEH. Functionally, involved in the regulation of sugars and amino acids metabolisms during the night period. This is NAD-dependent malic enzyme 1, mitochondrial (NAD-ME1) from Arabidopsis thaliana (Mouse-ear cress).